Reading from the N-terminus, the 215-residue chain is Large ribosomal subunit protein uL3 (215 aa).

Gln151 is subject to N5-methylglutamine.

It belongs to the universal ribosomal protein uL3 family. In terms of assembly, part of the 50S ribosomal subunit. Forms a cluster with proteins L14 and L19. In terms of processing, methylated by PrmB.

Functionally, one of the primary rRNA binding proteins, it binds directly near the 3'-end of the 23S rRNA, where it nucleates assembly of the 50S subunit. The sequence is that of Large ribosomal subunit protein uL3 from Rickettsia massiliae (strain Mtu5).